A 410-amino-acid polypeptide reads, in one-letter code: Transcription termination factor, mitochondrial (410 aa).

The transit peptide at 1 to 44 (MIRSLLRSFETALKLHAGLNMHPMHCSRRLLFSQYENRASPSRL) directs the protein to the mitochondrion.

It belongs to the mTERF family.

The protein localises to the mitochondrion. Its function is as follows. Transcription termination factor. Binds promoter DNA and regulates mitochondrial replication and transcription. Transcription termination activity may be polarized with highest termination activity occurring when its DNA-binding site is positioned in the reverse orientation with respect to the incoming RNA polymerase. Required for normal topology and maintenance of mitochondrial DNA (mtDNA) levels. Regulates mtDNA replication by promoting replication pausing, possibly by acting as a natural barrier to replication fork progression. Its function in replication pausing prevents unregulated replication that may occur for example by collisions between the machineries of DNA replication and transcription during mtDNA synthesis. This ensures the incorporation of RNA transcripts into replication intermediates at the replication fork and allow for proper fork progression. Shares mtDNA binding sites with the mitochondrial termination factor mTerf5 and thereby may antagonize mTerf5 function during replication to regulate pausing. Likely to function downstream of Dref which activates genes involved in mtDNA replication and maintenance. The polypeptide is Transcription termination factor, mitochondrial (Drosophila melanogaster (Fruit fly)).